A 184-amino-acid chain; its full sequence is ATP synthase subunit b, chloroplastic (184 aa).

The helical transmembrane segment at 27–49 (LATNLINLSVVLGVLIFFGKGVL) threads the bilayer.

The protein belongs to the ATPase B chain family. As to quaternary structure, F-type ATPases have 2 components, F(1) - the catalytic core - and F(0) - the membrane proton channel. F(1) has five subunits: alpha(3), beta(3), gamma(1), delta(1), epsilon(1). F(0) has four main subunits: a(1), b(1), b'(1) and c(10-14). The alpha and beta chains form an alternating ring which encloses part of the gamma chain. F(1) is attached to F(0) by a central stalk formed by the gamma and epsilon chains, while a peripheral stalk is formed by the delta, b and b' chains.

Its subcellular location is the plastid. The protein localises to the chloroplast thylakoid membrane. In terms of biological role, f(1)F(0) ATP synthase produces ATP from ADP in the presence of a proton or sodium gradient. F-type ATPases consist of two structural domains, F(1) containing the extramembraneous catalytic core and F(0) containing the membrane proton channel, linked together by a central stalk and a peripheral stalk. During catalysis, ATP synthesis in the catalytic domain of F(1) is coupled via a rotary mechanism of the central stalk subunits to proton translocation. Component of the F(0) channel, it forms part of the peripheral stalk, linking F(1) to F(0). The sequence is that of ATP synthase subunit b, chloroplastic from Nymphaea alba (White water-lily).